Here is a 476-residue protein sequence, read N- to C-terminus: Glutamate--tRNA ligase (476 aa).

The 'HIGH' region motif lies at 9 to 19 (PSPTGKLHIGT). Basic and acidic residues predominate over residues 109-129 (REEQKSRNKPPRYDNRHRSLS). The tract at residues 109-133 (REEQKSRNKPPRYDNRHRSLSTEEE) is disordered. Residues 248 to 252 (KLSKR) carry the 'KMSKS' region motif. An ATP-binding site is contributed by Lys251.

It belongs to the class-I aminoacyl-tRNA synthetase family. Glutamate--tRNA ligase type 1 subfamily. As to quaternary structure, monomer.

The protein resides in the cytoplasm. The catalysed reaction is tRNA(Glu) + L-glutamate + ATP = L-glutamyl-tRNA(Glu) + AMP + diphosphate. Functionally, catalyzes the attachment of glutamate to tRNA(Glu) in a two-step reaction: glutamate is first activated by ATP to form Glu-AMP and then transferred to the acceptor end of tRNA(Glu). This Prochlorococcus marinus (strain MIT 9211) protein is Glutamate--tRNA ligase.